Reading from the N-terminus, the 39-residue chain is Photosystem II reaction center protein J (39 aa).

The chain crosses the membrane as a helical span at residues 7 to 27 (IPLWIVAVVAGLGVITVVGLF).

This sequence belongs to the PsbJ family. PSII is composed of 1 copy each of membrane proteins PsbA, PsbB, PsbC, PsbD, PsbE, PsbF, PsbH, PsbI, PsbJ, PsbK, PsbL, PsbM, PsbT, PsbX, PsbY, PsbZ, Psb30/Ycf12, peripheral proteins PsbO, CyanoQ (PsbQ), PsbU, PsbV and a large number of cofactors. It forms dimeric complexes.

It is found in the cellular thylakoid membrane. Functionally, one of the components of the core complex of photosystem II (PSII). PSII is a light-driven water:plastoquinone oxidoreductase that uses light energy to abstract electrons from H(2)O, generating O(2) and a proton gradient subsequently used for ATP formation. It consists of a core antenna complex that captures photons, and an electron transfer chain that converts photonic excitation into a charge separation. The polypeptide is Photosystem II reaction center protein J (Synechococcus sp. (strain JA-2-3B'a(2-13)) (Cyanobacteria bacterium Yellowstone B-Prime)).